A 431-amino-acid polypeptide reads, in one-letter code: Argininosuccinate lyase (431 aa).

The protein belongs to the lyase 1 family. Argininosuccinate lyase subfamily.

It localises to the cytoplasm. It catalyses the reaction 2-(N(omega)-L-arginino)succinate = fumarate + L-arginine. It functions in the pathway amino-acid biosynthesis; L-arginine biosynthesis; L-arginine from L-ornithine and carbamoyl phosphate: step 3/3. The protein is Argininosuccinate lyase of Stenotrophomonas maltophilia (strain R551-3).